We begin with the raw amino-acid sequence, 385 residues long: UDP-N-acetylglucosamine--N-acetylmuramyl-(pentapeptide) pyrophosphoryl-undecaprenol N-acetylglucosamine transferase (385 aa).

UDP-N-acetyl-alpha-D-glucosamine-binding positions include 24-26 (TAG), Asn143, Arg180, Ser214, and Gln310.

The protein belongs to the glycosyltransferase 28 family. MurG subfamily.

It is found in the cell membrane. It carries out the reaction di-trans,octa-cis-undecaprenyl diphospho-N-acetyl-alpha-D-muramoyl-L-alanyl-D-glutamyl-meso-2,6-diaminopimeloyl-D-alanyl-D-alanine + UDP-N-acetyl-alpha-D-glucosamine = di-trans,octa-cis-undecaprenyl diphospho-[N-acetyl-alpha-D-glucosaminyl-(1-&gt;4)]-N-acetyl-alpha-D-muramoyl-L-alanyl-D-glutamyl-meso-2,6-diaminopimeloyl-D-alanyl-D-alanine + UDP + H(+). It participates in cell wall biogenesis; peptidoglycan biosynthesis. In terms of biological role, cell wall formation. Catalyzes the transfer of a GlcNAc subunit on undecaprenyl-pyrophosphoryl-MurNAc-pentapeptide (lipid intermediate I) to form undecaprenyl-pyrophosphoryl-MurNAc-(pentapeptide)GlcNAc (lipid intermediate II). This chain is UDP-N-acetylglucosamine--N-acetylmuramyl-(pentapeptide) pyrophosphoryl-undecaprenol N-acetylglucosamine transferase, found in Mycolicibacterium smegmatis (strain ATCC 700084 / mc(2)155) (Mycobacterium smegmatis).